The primary structure comprises 225 residues: UPF0758 protein NGK_1225 (225 aa).

Positions 102 to 224 (TLSDPDTVAD…VRSFRQLGLM (123 aa)) constitute an MPN domain. Residues His-173, His-175, and Asp-186 each contribute to the Zn(2+) site. A JAMM motif motif is present at residues 173–186 (HNHPGGSPEPSQED).

It belongs to the UPF0758 family.

The chain is UPF0758 protein NGK_1225 from Neisseria gonorrhoeae (strain NCCP11945).